A 489-amino-acid chain; its full sequence is Dihydropyrimidinase 1 (489 aa).

Zn(2+) contacts are provided by histidine 61, histidine 63, and lysine 156. An N6-carboxylysine modification is found at lysine 156. Tyrosine 161 lines the substrate pocket. Zn(2+) is bound by residues histidine 189 and histidine 245. Serine 295 is a binding site for substrate. Position 323 (aspartate 323) interacts with Zn(2+). Asparagine 344 contacts substrate.

Belongs to the metallo-dependent hydrolases superfamily. Hydantoinase/dihydropyrimidinase family. Homotetramer. Zn(2+) serves as cofactor. Post-translationally, carboxylation allows a single lysine to coordinate two zinc ions. As to expression, in L1-L2 larvae, expressed in body hypodermal cells, hemidesmosomes and in a neuronal cell between the pharynx and ring neuropil. In adults, expression is seen in body hypodermal cells and pharynx.

It localises to the nucleus. The enzyme catalyses 5,6-dihydrouracil + H2O = 3-(carbamoylamino)propanoate + H(+). The chain is Dihydropyrimidinase 1 (dhp-1) from Caenorhabditis elegans.